The sequence spans 205 residues: Protein N-terminal glutamine amidohydrolase (205 aa).

Catalysis depends on residues C20, H74, and D90.

It belongs to the NTAQ1 family. As to quaternary structure, monomer.

The catalysed reaction is N-terminal L-glutaminyl-[protein] + H2O = N-terminal L-glutamyl-[protein] + NH4(+). Mediates the side-chain deamidation of N-terminal glutamine residues to glutamate, an important step in N-end rule pathway of protein degradation. Conversion of the resulting N-terminal glutamine to glutamate renders the protein susceptible to arginylation, polyubiquitination and degradation as specified by the N-end rule. Does not act on substrates with internal or C-terminal glutamine and does not act on non-glutamine residues in any position. In Drosophila willistoni (Fruit fly), this protein is Protein N-terminal glutamine amidohydrolase (tun).